Here is a 67-residue protein sequence, read N- to C-terminus: Beta-defensin 123 (67 aa).

An N-terminal signal peptide occupies residues 1–20; sequence MKLLLLTLTVLLLLSQLTPG. 3 disulfides stabilise this stretch: Cys25/Cys52, Cys32/Cys46, and Cys36/Cys53.

It belongs to the beta-defensin family.

It is found in the secreted. In terms of biological role, has antibacterial activity. The polypeptide is Beta-defensin 123 (DEFB123) (Gorilla gorilla gorilla (Western lowland gorilla)).